Consider the following 358-residue polypeptide: MLRLLRSSWARGLGSGVATWRPSAGLFRPGCPGIRQASGASDTPHHQSPSSESPVQPVGVGVCSMMRLPLQSSPEGLDAAFIGVPLDTGTSNRPGARFGPCRIREESLMLGAVNPSTGALPFQSLRVADLGNVNVNLYNLQDSCLLIREAYQNVLAAGCIPLTLGGDQTITYPILQAVAKEHGPVGLVHVGAHTNTTDKPREEKVYHRTPFRRSVDEGLLDSKRVVQIGIRGSSRTLDPYRYSRSQGFRVVLAEDCWMKSLVPLMAEVRQQMGGKPLYISFAIDALDPAYAPGTGTPEIAGLTPSQALEIIRGCQGLNVVGCDLVEVSPPYDLSGNTALLAANLLFEMLCALPKVTTV.

The transit peptide at 1-36 (MLRLLRSSWARGLGSGVATWRPSAGLFRPGCPGIRQ) directs the protein to the mitochondrion. Residues 31 to 56 (CPGIRQASGASDTPHHQSPSSESPVQ) form a disordered region. Low complexity predominate over residues 46–56 (HQSPSSESPVQ). Mn(2+) is bound by residues Gln168 and His193. Lys199 bears the N6-acetyllysine mark. Lys223 is subject to N6-acetyllysine; alternate. The residue at position 223 (Lys223) is an N6-succinyllysine; alternate. A Mn(2+)-binding site is contributed by Asp284.

Belongs to the arginase family. Agmatinase subfamily. Mn(2+) is required as a cofactor. In terms of tissue distribution, detected only in liver.

It is found in the mitochondrion. It catalyses the reaction 3-guanidinopropanoate + H2O = urea + beta-alanine. The enzyme catalyses 4-guanidinobutanoate + H2O = urea + 4-aminobutanoate. It carries out the reaction taurocyamine + H2O = urea + taurine. The catalysed reaction is L-arginine + H2O = urea + L-ornithine. It participates in nitrogen metabolism; urea cycle; L-ornithine and urea from L-arginine: step 1/1. Its function is as follows. Hydrolyzes linear guanidino acids to form urea and the corresponding amines. Displays specificity for substrates having a negatively charged head group and short chains including taurocyamine, guanidino propanoic and butanoic acids. May protect cells by detoxifying potentially harmful amounts of guanidino acids. Metabolizes L-arginine with low efficiency. This chain is Guanidino acid hydrolase, mitochondrial (Agmat), found in Mus musculus (Mouse).